Consider the following 556-residue polypeptide: Oxygen-dependent choline dehydrogenase (556 aa).

FAD is bound at residue 4–33 (DYIIIGAGSAGNVLATRLTEDPNTTVLLLE). Histidine 473 functions as the Proton acceptor in the catalytic mechanism.

The protein belongs to the GMC oxidoreductase family. Requires FAD as cofactor.

The catalysed reaction is choline + A = betaine aldehyde + AH2. The enzyme catalyses betaine aldehyde + NAD(+) + H2O = glycine betaine + NADH + 2 H(+). It functions in the pathway amine and polyamine biosynthesis; betaine biosynthesis via choline pathway; betaine aldehyde from choline (cytochrome c reductase route): step 1/1. Functionally, involved in the biosynthesis of the osmoprotectant glycine betaine. Catalyzes the oxidation of choline to betaine aldehyde and betaine aldehyde to glycine betaine at the same rate. The chain is Oxygen-dependent choline dehydrogenase from Escherichia coli O127:H6 (strain E2348/69 / EPEC).